A 160-amino-acid polypeptide reads, in one-letter code: SsrA-binding protein (160 aa).

The protein belongs to the SmpB family.

It is found in the cytoplasm. Its function is as follows. Required for rescue of stalled ribosomes mediated by trans-translation. Binds to transfer-messenger RNA (tmRNA), required for stable association of tmRNA with ribosomes. tmRNA and SmpB together mimic tRNA shape, replacing the anticodon stem-loop with SmpB. tmRNA is encoded by the ssrA gene; the 2 termini fold to resemble tRNA(Ala) and it encodes a 'tag peptide', a short internal open reading frame. During trans-translation Ala-aminoacylated tmRNA acts like a tRNA, entering the A-site of stalled ribosomes, displacing the stalled mRNA. The ribosome then switches to translate the ORF on the tmRNA; the nascent peptide is terminated with the 'tag peptide' encoded by the tmRNA and targeted for degradation. The ribosome is freed to recommence translation, which seems to be the essential function of trans-translation. This chain is SsrA-binding protein, found in Nocardia farcinica (strain IFM 10152).